Reading from the N-terminus, the 756-residue chain is Probable cleavage and polyadenylation specificity factor subunit 2 (756 aa).

2 positions are modified to phosphothreonine: Thr-221 and Thr-226.

Belongs to the metallo-beta-lactamase superfamily. RNA-metabolizing metallo-beta-lactamase-like family. CPSF2/YSH1 subfamily. As to quaternary structure, component of the cleavage and polyadenylation specificity factor (CPSF) complex, composed of at least Clp, Cpsf73, Cpsf100 and Cpsf160. Interacts with Sym and Cpsf73 forming a core cleavage factor required for both polyadenylated and histone mRNA processing. Interacts with Slbp and Lsm11.

Its subcellular location is the nucleus. Its function is as follows. Component of the cleavage and polyadenylation specificity factor (CPSF) complex that plays a key role in pre-mRNA 3'-end formation, recognizing the AAUAAA signal sequence and interacting with poly(A) polymerase and other factors to bring about cleavage and poly(A) addition. Required for the cotranscriptional processing of 3'-ends of polyadenylated and histone pre-mRNA. The sequence is that of Probable cleavage and polyadenylation specificity factor subunit 2 (Cpsf100) from Drosophila melanogaster (Fruit fly).